A 274-amino-acid polypeptide reads, in one-letter code: Large ribosomal subunit protein uL2cz/uL2cy (274 aa).

Disordered regions lie at residues 1–25 and 224–274; these read MAIHLYKTSTPSTRNGAVDSQVKSN and NPVD…RRSK.

This sequence belongs to the universal ribosomal protein uL2 family. As to quaternary structure, part of the 50S ribosomal subunit.

The protein localises to the plastid. The protein resides in the chloroplast. The sequence is that of Large ribosomal subunit protein uL2cz/uL2cy (rpl2-A) from Aethionema cordifolium (Lebanon stonecress).